A 407-amino-acid polypeptide reads, in one-letter code: PWWP domain-containing protein 3 (407 aa).

Residues 1–46 are disordered; sequence MMVARTRSQKRKLEEINNQKKIKTKKKATGQQTSNTKNLRDVKKKG. Residues 63–129 enclose the PWWP domain; sequence NGEYVLAKMS…SSNVLPLTVD (67 aa). A phosphoserine mark is found at serine 160 and serine 162. Residues 163–248 are disordered; the sequence is DVEEDEFEPE…PIPSPKKTAK (86 aa). The span at 172–208 shows a compositional bias: basic and acidic residues; it reads ENTRKKLQKPIEKPKKEKIEATPKIDGGKRLKNEKSS. Phosphoserine occurs at positions 236, 238, and 242.

As to quaternary structure, component of the mst2 complex composed of at least eaf6, mst2, nto1, pdp3, ptf1, ptf2 and tfg3.

The protein localises to the nucleus. Its function is as follows. Component of the mst2 complex which is a highly specific H3 lysine 14 (H3K14) acetyltransferase that functions together with gcn5 to regulate global levels of H3K14 acetylation (H3K14ac), critical for DNA damage checkpoint activation. This chain is PWWP domain-containing protein 3 (pdp3), found in Schizosaccharomyces pombe (strain 972 / ATCC 24843) (Fission yeast).